A 62-amino-acid chain; its full sequence is Photosystem II reaction center protein Z (62 aa).

A run of 2 helical transmembrane segments spans residues 8–28 (LVFI…VTFA) and 41–61 (YTGA…NSFI).

It belongs to the PsbZ family. As to quaternary structure, PSII is composed of 1 copy each of membrane proteins PsbA, PsbB, PsbC, PsbD, PsbE, PsbF, PsbH, PsbI, PsbJ, PsbK, PsbL, PsbM, PsbT, sbX, PsbY, PsbZ, Psb30/Ycf12, at least 3 peripheral proteins of the oxygen-evolving complex and a large number of cofactors. It forms dimeric complexes.

The protein resides in the plastid. The protein localises to the chloroplast thylakoid membrane. Functionally, may control the interaction of photosystem II (PSII) cores with the light-harvesting antenna, regulates electron flow through the 2 photosystem reaction centers. PSII is a light-driven water plastoquinone oxidoreductase, using light energy to abstract electrons from H(2)O, generating a proton gradient subsequently used for ATP formation. This chain is Photosystem II reaction center protein Z, found in Gracilaria tenuistipitata var. liui (Red alga).